Reading from the N-terminus, the 1321-residue chain is MASAPLPGPPASAGGDGPNLNNNNNNNNHSVRKCGYLRKQKHGHKRFFVLRGPGTGGDEASAAGGSPPQPPRLEYYESEKKWRSKAGAPKRVIALDCCLNINKRADAKHKYLIALYTKDEYFAVAAENEQEQEGWYRALTDLVSEGRSGEGGSGTTGGSCSASLPGVLGGSAGAAGCDDNYGLVTPATAVYREVWQVNLKPKGLGQSKNLTGVYRLCLSARTIGFVKLNCEQPSVTLQLMNIRRCGHSDSFFFIEVGRSAVTGPGELWMQADDSVVAQNIHETILEAMKALKELFEFRPRSKSQSSGSSATHPISVPGARRHHHLVNLPPSQTGLVRRSRTDSLAATPPAAKCTSCRVRTASEGDGGAAGGAGTAGGRPMSVAGSPLSPGPVRAPLSRSHTLSAGCGGRPSKVTLAPAGGALQHSRSMSMPVAHSPPAATSPGSLSSSSGHGSGSYPLPPGSHPHLPHPLHHPQGQRPSSGSASASGSPSDPGFMSLDEYGSSPGDLRAFSSHRSNTPESIAETPPARDGSGGELYGYMSMDRPLSHCGRPYRRVSGDGAQDLDRGLRKRTYSLTTPARQRQVPQPSSASLDEYTLMRATFSGSSGRLCPSFPASSPKVAYNPYPEDYGDIEIGSHKSSSSNLGADDGYMPMTPGAALRSGGPNSCKSDDYMPMSPTSVSAPKQILQPRLAAALPPSGAAVPAPPSGVGRTFPVNGGGYKASSPAESSPEDSGYMRMWCGSKLSMENPDPKLLPNGDYLNMSPSEAGTAGTPPDFSAALRGGSEGLKGIPGHCYSSLPRSYKAPCSCSGDNDQYVLMSSPVGRILEEERLEPQATPGAGTFGAAGGSHTQPHHSAVPSSMRPSAIGGRPEGFLGQRCRAVRPTRLSLEGLQTLPSMQEYPLPTEPKSPGEYINIDFGEAGTRLSPPAPPLLASAASSSSLLSASSPASSLGSGTPGTSSDSRQRSPLSDYMNLDFSSPKSPKPSTRSGDTVGSMDGLLSPEASSPYPPLPPRPSTSPSSLQQPLPPAPGDLYRLPPASAATSQGPTAGSSMSSEPGDNGDYTEMAFGVAATPPQPIVAPPKPEGARVASPTSGLKRLSLMDQVSGVEAFLQVSQPPDPHRGAKVIRADPQGGRRRHSSETFSSTTTVTPVSPSFAHNSKRHNSASVENVSLRKSSEGSSTLGGGDEPPTSPGQAQPLVAVPPVPQARPWNPGQPGALIGCPGGSSSPMRRETSVGFQNGLNYIAIDVRGEQGSLAQSQPQPGDKNSWSRTRSLGGLLGTVGGSGASGVCGGPGTGALPSASTYASIDFLSHHLKEATVVKE.

Residues 1–10 (MASAPLPGPP) show a composition bias toward pro residues. 2 disordered regions span residues 1–32 (MASAPLPGPPASAGGDGPNLNNNNNNNNHSVR) and 51–73 (RGPGTGGDEASAAGGSPPQPPRL). The PH domain maps to 16–144 (DGPNLNNNNN…WYRALTDLVS (129 aa)). The span at 18–28 (PNLNNNNNNNN) shows a compositional bias: low complexity. The IRS-type PTB domain maps to 191–295 (YREVWQVNLK…EAMKALKELF (105 aa)). The interval 299–536 (PRSKSQSSGS…ARDGSGGELY (238 aa)) is disordered. A phosphoserine mark is found at Ser-303 and Ser-343. Thr-347 bears the Phosphothreonine mark. Phosphoserine is present on Ser-362. Residues 364–376 (GDGGAAGGAGTAG) are compositionally biased toward gly residues. A phosphoserine mark is found at Ser-381, Ser-385, and Ser-388. At Arg-409 the chain carries Omega-N-methylarginine. Composition is skewed to low complexity over residues 435-456 (SPPAATSPGSLSSSSGHGSGSY) and 478-490 (PSSGSASASGSPS). Position 517 is a phosphothreonine (Thr-517). Ser-520 is subject to Phosphoserine. A Phosphothreonine modification is found at Thr-524. Tyr-536 is modified (phosphotyrosine; by INSR). The short motif at 536–539 (YGYM) is the YXXM motif 1 element. Position 556 is a phosphoserine; by PLK1 (Ser-556). Ser-573 is modified (phosphoserine). Phosphothreonine is present on residues Thr-575 and Thr-576. Ser-590 is modified (phosphoserine). The YXXM motif 2 signature appears at 594–597 (YTLM). Phosphoserine occurs at positions 604 and 616. Phosphotyrosine is present on Tyr-649. 2 consecutive short sequence motifs (YXXM motif) follow at residues 649 to 652 (YMPM) and 671 to 674 (YMPM). Tyr-671 bears the Phosphotyrosine; by INSR mark. Phosphoserine is present on residues Ser-675, Ser-678, Ser-727, and Ser-728. Positions 734–737 (YMRM) match the YXXM motif 5 motif. At Ser-762 the chain carries Phosphoserine. Phosphothreonine is present on Thr-771. Ser-796 carries the post-translational modification Phosphoserine. A YXXM motif 6 motif is present at residues 814 to 817 (YVLM). Ser-819 bears the Phosphoserine mark. Disordered stretches follow at residues 834-871 (ATPGAGTFGAAGGSHTQPHHSAVPSSMRPSAIGGRPEG) and 888-1091 (EGLQ…ASPT). The residue at position 907 (Ser-907) is a Phosphoserine. Tyr-911 is subject to Phosphotyrosine; by INSR. Residues 930 to 959 (LLASAASSSSLLSASSPASSLGSGTPGTSS) are compositionally biased toward low complexity. Ser-965 carries the phosphoserine modification. Tyr-970 is subject to Phosphotyrosine; by INSR. Residues 1005–1014 (PYPPLPPRPS) are compositionally biased toward pro residues. The span at 1039 to 1055 (AATSQGPTAGSSMSSEP) shows a compositional bias: polar residues. The YXXM motif 7 motif lies at 1061–1064 (YTEM). Thr-1071 is subject to Phosphothreonine. The span at 1072–1082 (PPQPIVAPPKP) shows a compositional bias: pro residues. Ser-1089 bears the Phosphoserine mark. Ser-1098 carries the phosphoserine; by PLK1 modification. The segment at 1110-1198 (LQVSQPPDPH…TSPGQAQPLV (89 aa)) is disordered. Positions 1139–1154 (ETFSSTTTVTPVSPSF) are enriched in low complexity. At Thr-1148 the chain carries Phosphothreonine. Phosphoserine is present on residues Ser-1151, Ser-1163, Ser-1165, Ser-1175, and Ser-1190. Residues 1163–1179 (SASVENVSLRKSSEGSS) are compositionally biased toward polar residues. At Tyr-1242 the chain carries Phosphotyrosine; by INSR. Positions 1251–1275 (QGSLAQSQPQPGDKNSWSRTRSLGG) are disordered. Over residues 1253–1271 (SLAQSQPQPGDKNSWSRTR) the composition is skewed to polar residues. Tyr-1303 is modified (phosphotyrosine; by INSR). Residue Lys-1314 forms a Glycyl lysine isopeptide (Lys-Gly) (interchain with G-Cter in ubiquitin) linkage.

As to quaternary structure, interacts with PHIP. Interacts with SH2B1; this interaction enhances leptin-induced activation of the PI3-kinase pathway. Interacts with GRB2. Interacts with PIK3R1. Interacts with DVL2; this interaction promotes the Wnt/beta-catenin signaling pathway. Post-translationally, phosphorylation fluctuates in a cell-cycle dependent manner with hyperphosphorylation during mitosis. Phosphorylated at Ser-556 and Ser-1098 by PLK1; these phosphorylations prevent the activation of the PI3K pathway upon growth factor stimulation by inhibiting the binding between IRS2 and the PI3K pathway components and increasing the level of IRS2 protein degradation. In addition, they prevent premature mitotic exit. Monoubiquitinated by NEDD4; leading to enhanced IGF1 signaling. During cell cycle, ubiquitination and proteasomal degradation are controlled by FZR1. As to expression, skeletal muscle, lung, brain, liver, kidney, heart and spleen.

It is found in the cytoplasm. Its subcellular location is the cytosol. Functionally, signaling adapter protein that participates in the signal transduction from two prominent receptor tyrosine kinases, insulin receptor/INSR and insulin-like growth factor I receptor/IGF1R. Plays therefore an important role in development, growth, glucose homeostasis as well as lipid metabolism. Upon phosphorylation by the insulin receptor, functions as a signaling scaffold that propagates insulin action through binding to SH2 domain-containing proteins including the p85 regulatory subunit of PI3K, NCK1, NCK2, GRB2 or SHP2. Recruitment of GRB2 leads to the activation of the guanine nucleotide exchange factor SOS1 which in turn triggers the Ras/Raf/MEK/MAPK signaling cascade. Activation of the PI3K/AKT pathway is responsible for most of insulin metabolic effects in the cell, and the Ras/Raf/MEK/MAPK is involved in the regulation of gene expression and in cooperation with the PI3K pathway regulates cell growth and differentiation. Acts a positive regulator of the Wnt/beta-catenin signaling pathway through suppression of DVL2 autophagy-mediated degradation leading to cell proliferation. Plays a role in cell cycle progression by promoting a robust spindle assembly checkpoint (SAC) during M-phase. In macrophages, IL4-induced tyrosine phosphorylation of IRS2 leads to the recruitment and activation of phosphoinositide 3-kinase (PI3K). In Mus musculus (Mouse), this protein is Insulin receptor substrate 2 (Irs2).